A 308-amino-acid polypeptide reads, in one-letter code: MNIVFMGTPDFAVPSLQRMIKEYNVTAILTQPDKPKGRGKKMAYSAVKEEGLKHEIPIYQPIKLKDDRDLIEKLKELKPDFIIVVAFGQILTKEVLDIPKYGCINLHASLLPMYRGAAPLNWAIINGEKSSGNTTMLMDVGLDTGDMILKDEVEITNNMTTGELHDILMVRGADLLVKSIEGISKGDIVPEKQGNETFYAKMLDKNIANIDWNKSAEEIHNLVRGLNPWPIAYTDYKNERMKIYETEVLKEKSNKEPGTIIDVSKNGVKVSCKEDVLLIKRVQFPNGKPLTIEQYINGHEIEENIILQ.

Residue 109–112 (SLLP) coordinates (6S)-5,6,7,8-tetrahydrofolate.

Belongs to the Fmt family.

It carries out the reaction L-methionyl-tRNA(fMet) + (6R)-10-formyltetrahydrofolate = N-formyl-L-methionyl-tRNA(fMet) + (6S)-5,6,7,8-tetrahydrofolate + H(+). Its function is as follows. Attaches a formyl group to the free amino group of methionyl-tRNA(fMet). The formyl group appears to play a dual role in the initiator identity of N-formylmethionyl-tRNA by promoting its recognition by IF2 and preventing the misappropriation of this tRNA by the elongation apparatus. The protein is Methionyl-tRNA formyltransferase of Clostridium beijerinckii (strain ATCC 51743 / NCIMB 8052) (Clostridium acetobutylicum).